The sequence spans 264 residues: 3-methyl-2-oxobutanoate hydroxymethyltransferase (264 aa).

2 residues coordinate Mg(2+): aspartate 45 and aspartate 84. Residues 45–46, aspartate 84, and lysine 112 each bind 3-methyl-2-oxobutanoate; that span reads DS. Glutamate 114 is a binding site for Mg(2+). The active-site Proton acceptor is glutamate 181.

It belongs to the PanB family. As to quaternary structure, homodecamer; pentamer of dimers. Mg(2+) serves as cofactor.

Its subcellular location is the cytoplasm. The enzyme catalyses 3-methyl-2-oxobutanoate + (6R)-5,10-methylene-5,6,7,8-tetrahydrofolate + H2O = 2-dehydropantoate + (6S)-5,6,7,8-tetrahydrofolate. The protein operates within cofactor biosynthesis; (R)-pantothenate biosynthesis; (R)-pantoate from 3-methyl-2-oxobutanoate: step 1/2. Catalyzes the reversible reaction in which hydroxymethyl group from 5,10-methylenetetrahydrofolate is transferred onto alpha-ketoisovalerate to form ketopantoate. This is 3-methyl-2-oxobutanoate hydroxymethyltransferase from Erwinia tasmaniensis (strain DSM 17950 / CFBP 7177 / CIP 109463 / NCPPB 4357 / Et1/99).